Consider the following 445-residue polypeptide: Phosphoglucosamine mutase (445 aa).

Catalysis depends on serine 99, which acts as the Phosphoserine intermediate. Residues serine 99, aspartate 242, aspartate 244, and aspartate 246 each coordinate Mg(2+). Serine 99 carries the phosphoserine modification.

Belongs to the phosphohexose mutase family. Mg(2+) serves as cofactor. Post-translationally, activated by phosphorylation.

It carries out the reaction alpha-D-glucosamine 1-phosphate = D-glucosamine 6-phosphate. Its function is as follows. Catalyzes the conversion of glucosamine-6-phosphate to glucosamine-1-phosphate. The protein is Phosphoglucosamine mutase of Helicobacter pylori (strain G27).